A 393-amino-acid polypeptide reads, in one-letter code: MNVTTTRKDLMIVNMGPHHPSMHGVLRLILTLDGEDVIDCEPILGYLHRGMEKIAENRTVIQYLPYVTRWDYLATMFTEAITINGPEQLGNIQVPKRASYIRIIMLELSRIASHLLWLGPFMADIGAQTPFFYIFRERELVYDLFEAATGMRMMHNYFRIGGVAADLPYGWIDKCLDFCDYFLTAVSEYQKLITRNPIFLERVEGVGIIGGEEAINWGLSGPMLRASGIEWDLRKVDRYECYGELDWEIRWQKEGDSLARYLVRMSEMTESIKIIQQALEGIPGGPYENLEIRCFDREKDPEWDGFEYRFISKKPSPTFELPKQELYVRVEAPKGELGIFLIGDQSGFPWRWKIRPPGFINLQILPQLVKRMKLADIMTILGSIDIIMGEVDR.

Belongs to the complex I 49 kDa subunit family. As to quaternary structure, NDH is composed of at least 16 different subunits, 5 of which are encoded in the nucleus.

The protein localises to the plastid. Its subcellular location is the chloroplast thylakoid membrane. The enzyme catalyses a plastoquinone + NADH + (n+1) H(+)(in) = a plastoquinol + NAD(+) + n H(+)(out). It catalyses the reaction a plastoquinone + NADPH + (n+1) H(+)(in) = a plastoquinol + NADP(+) + n H(+)(out). Its function is as follows. NDH shuttles electrons from NAD(P)H:plastoquinone, via FMN and iron-sulfur (Fe-S) centers, to quinones in the photosynthetic chain and possibly in a chloroplast respiratory chain. The immediate electron acceptor for the enzyme in this species is believed to be plastoquinone. Couples the redox reaction to proton translocation, and thus conserves the redox energy in a proton gradient. This is NAD(P)H-quinone oxidoreductase subunit H, chloroplastic from Oenothera biennis (German evening primrose).